The primary structure comprises 364 residues: MPLDCTDYREIFLNDRPMMDTRAPIEFTKGAFPGVLNLPLMTDQERQRVGTCYKQQGQQAAIVLGHQLVSGAIKEQRIQAWADFARAHPDGLLYCFRGGLRSQIVQQWLREAGIDYPRVGGGYKAMRTFLLDTTEQALQQCDFVLLGGMTGTGKTQVLGQLDNALDLEGHANHRGSSFGRRATGQPSNIDFENRLAVDLLKKRERGVQSFVLEDENRMIGSCALPLPLYQSMQGLPMVWLEDSLANRVQRILDDYVVNLCAEFVAVHGEQGFALFAERLLESLNKIHKRLGGERHQRLFLLMEAALAEQARSGDVERHRAWIEGLLGEYYDPMYAFQRESKGARIEFSGEHGAVLDYLRQRSPR.

The 124-residue stretch at 12–135 (FLNDRPMMDT…MRTFLLDTTE (124 aa)) folds into the Rhodanese domain. Catalysis depends on cysteine 95, which acts as the S-selanylcysteine intermediate.

It belongs to the SelU family. In terms of assembly, monomer.

It carries out the reaction 5-methylaminomethyl-2-thiouridine(34) in tRNA + selenophosphate + (2E)-geranyl diphosphate + H2O + H(+) = 5-methylaminomethyl-2-selenouridine(34) in tRNA + (2E)-thiogeraniol + phosphate + diphosphate. The catalysed reaction is 5-methylaminomethyl-2-thiouridine(34) in tRNA + (2E)-geranyl diphosphate = 5-methylaminomethyl-S-(2E)-geranyl-thiouridine(34) in tRNA + diphosphate. The enzyme catalyses 5-methylaminomethyl-S-(2E)-geranyl-thiouridine(34) in tRNA + selenophosphate + H(+) = 5-methylaminomethyl-2-(Se-phospho)selenouridine(34) in tRNA + (2E)-thiogeraniol. It catalyses the reaction 5-methylaminomethyl-2-(Se-phospho)selenouridine(34) in tRNA + H2O = 5-methylaminomethyl-2-selenouridine(34) in tRNA + phosphate. Functionally, involved in the post-transcriptional modification of the uridine at the wobble position (U34) of tRNA(Lys), tRNA(Glu) and tRNA(Gln). Catalyzes the conversion of 2-thiouridine (S2U-RNA) to 2-selenouridine (Se2U-RNA). Acts in a two-step process involving geranylation of 2-thiouridine (S2U) to S-geranyl-2-thiouridine (geS2U) and subsequent selenation of the latter derivative to 2-selenouridine (Se2U) in the tRNA chain. The polypeptide is tRNA 2-selenouridine synthase (Pseudomonas fluorescens (strain ATCC BAA-477 / NRRL B-23932 / Pf-5)).